The following is a 26-amino-acid chain: uncharacterized protein (26 aa).

Its subcellular location is the plastid. It is found in the chloroplast. This is an uncharacterized protein from Trieres chinensis (Marine centric diatom).